The following is a 686-amino-acid chain: Methionine--tRNA ligase (686 aa).

Positions 13–23 (PYANGQIHIGH) match the 'HIGH' region motif. C144, C147, C157, and C160 together coordinate Zn(2+). The 'KMSKS' region motif lies at 335 to 339 (KMSKS). Residue K338 participates in ATP binding. One can recognise a tRNA-binding domain in the interval 580 to 686 (DFAKVDLRVA…EGAVPGMRIG (107 aa)).

The protein belongs to the class-I aminoacyl-tRNA synthetase family. MetG type 1 subfamily. Homodimer. Zn(2+) serves as cofactor.

The protein localises to the cytoplasm. It carries out the reaction tRNA(Met) + L-methionine + ATP = L-methionyl-tRNA(Met) + AMP + diphosphate. Its function is as follows. Is required not only for elongation of protein synthesis but also for the initiation of all mRNA translation through initiator tRNA(fMet) aminoacylation. The polypeptide is Methionine--tRNA ligase (Cupriavidus necator (strain ATCC 17699 / DSM 428 / KCTC 22496 / NCIMB 10442 / H16 / Stanier 337) (Ralstonia eutropha)).